Here is a 155-residue protein sequence, read N- to C-terminus: Small ribosomal subunit protein uS7 (155 aa).

It belongs to the universal ribosomal protein uS7 family. As to quaternary structure, part of the 30S ribosomal subunit. Contacts proteins S9 and S11.

Its function is as follows. One of the primary rRNA binding proteins, it binds directly to 16S rRNA where it nucleates assembly of the head domain of the 30S subunit. Is located at the subunit interface close to the decoding center, probably blocks exit of the E-site tRNA. The sequence is that of Small ribosomal subunit protein uS7 from Sulfurimonas denitrificans (strain ATCC 33889 / DSM 1251) (Thiomicrospira denitrificans (strain ATCC 33889 / DSM 1251)).